We begin with the raw amino-acid sequence, 393 residues long: Phosphoglycerate kinase (393 aa).

Residues 21-23 (DFN), arginine 37, 60-63 (HLGR), arginine 119, and arginine 152 each bind substrate. ATP-binding positions include lysine 202, glycine 291, glutamate 322, and 348 to 351 (GGDT).

It belongs to the phosphoglycerate kinase family. Monomer.

It is found in the cytoplasm. The enzyme catalyses (2R)-3-phosphoglycerate + ATP = (2R)-3-phospho-glyceroyl phosphate + ADP. Its pathway is carbohydrate degradation; glycolysis; pyruvate from D-glyceraldehyde 3-phosphate: step 2/5. This Coprothermobacter proteolyticus (strain ATCC 35245 / DSM 5265 / OCM 4 / BT) protein is Phosphoglycerate kinase.